A 749-amino-acid chain; its full sequence is Ribosomal RNA large subunit methyltransferase K/L (749 aa).

Residues 43-154 enclose the THUMP domain; it reads QGYKVCLWSR…KDKATIYLDL (112 aa). Residues 386-406 form a disordered region; the sequence is VEPVAPKKTNKETPEPINPWT.

This sequence belongs to the methyltransferase superfamily. RlmKL family.

It localises to the cytoplasm. The enzyme catalyses guanosine(2445) in 23S rRNA + S-adenosyl-L-methionine = N(2)-methylguanosine(2445) in 23S rRNA + S-adenosyl-L-homocysteine + H(+). It catalyses the reaction guanosine(2069) in 23S rRNA + S-adenosyl-L-methionine = N(2)-methylguanosine(2069) in 23S rRNA + S-adenosyl-L-homocysteine + H(+). Its function is as follows. Specifically methylates the guanine in position 2445 (m2G2445) and the guanine in position 2069 (m7G2069) of 23S rRNA. The protein is Ribosomal RNA large subunit methyltransferase K/L of Psychromonas ingrahamii (strain DSM 17664 / CCUG 51855 / 37).